Reading from the N-terminus, the 393-residue chain is NAD(P)H-quinone oxidoreductase subunit H, chloroplastic (393 aa).

It belongs to the complex I 49 kDa subunit family. NDH is composed of at least 16 different subunits, 5 of which are encoded in the nucleus.

Its subcellular location is the plastid. The protein localises to the chloroplast thylakoid membrane. The catalysed reaction is a plastoquinone + NADH + (n+1) H(+)(in) = a plastoquinol + NAD(+) + n H(+)(out). It carries out the reaction a plastoquinone + NADPH + (n+1) H(+)(in) = a plastoquinol + NADP(+) + n H(+)(out). Functionally, NDH shuttles electrons from NAD(P)H:plastoquinone, via FMN and iron-sulfur (Fe-S) centers, to quinones in the photosynthetic chain and possibly in a chloroplast respiratory chain. The immediate electron acceptor for the enzyme in this species is believed to be plastoquinone. Couples the redox reaction to proton translocation, and thus conserves the redox energy in a proton gradient. The protein is NAD(P)H-quinone oxidoreductase subunit H, chloroplastic of Drimys granadensis.